A 629-amino-acid polypeptide reads, in one-letter code: Methionine--tRNA ligase (629 aa).

The 'HIGH' region motif lies at 10–20 (YYVNSEPHIGS). Zn(2+) contacts are provided by Cys-125, Cys-128, Cys-146, and Cys-149. A 'KMSKS' region motif is present at residues 297–301 (KISKS). ATP is bound at residue Lys-300. The 101-residue stretch at 529-629 (DFSKVDLRIA…GEITPGAKVS (101 aa)) folds into the tRNA-binding domain.

It belongs to the class-I aminoacyl-tRNA synthetase family. MetG type 2A subfamily. In terms of assembly, homodimer. The cofactor is Zn(2+).

Its subcellular location is the cytoplasm. It carries out the reaction tRNA(Met) + L-methionine + ATP = L-methionyl-tRNA(Met) + AMP + diphosphate. In terms of biological role, is required not only for elongation of protein synthesis but also for the initiation of all mRNA translation through initiator tRNA(fMet) aminoacylation. In Thermotoga maritima (strain ATCC 43589 / DSM 3109 / JCM 10099 / NBRC 100826 / MSB8), this protein is Methionine--tRNA ligase (metG).